We begin with the raw amino-acid sequence, 282 residues long: Ribosome biogenesis GTPase A (282 aa).

Positions 14–178 constitute a CP-type G domain; it reads RREVTEKLKL…LLDTPGILWP (165 aa). GTP is bound by residues 58–61, 86–87, 130–135, and Gly174; these read NKAD, NS, and NVGKST.

This sequence belongs to the TRAFAC class YlqF/YawG GTPase family. MTG1 subfamily. As to quaternary structure, interacts with ctc. Interacts with the immature 50S ribosome subunit. 2 molecules of RbgA bind to one 50S subunit.

It localises to the cytoplasm. Essential protein that is required for a late step of 50S ribosomal subunit assembly. Has GTPase activity that is stimulated by interaction with the immature 50S ribosome subunit. Binds to the 23S rRNA. Required for the association of ribosomal proteins RplP and RpmA with the large subunit. In Bacillus subtilis (strain 168), this protein is Ribosome biogenesis GTPase A (rbgA).